A 199-amino-acid polypeptide reads, in one-letter code: Pyridoxal 5'-phosphate synthase subunit PdxT (199 aa).

G47–S49 lines the L-glutamine pocket. C79 acts as the Nucleophile in catalysis. Residues R106 and I133–R134 each bind L-glutamine. Catalysis depends on charge relay system residues H169 and E171.

The protein belongs to the glutaminase PdxT/SNO family. In the presence of PdxS, forms a dodecamer of heterodimers. Only shows activity in the heterodimer.

The enzyme catalyses aldehydo-D-ribose 5-phosphate + D-glyceraldehyde 3-phosphate + L-glutamine = pyridoxal 5'-phosphate + L-glutamate + phosphate + 3 H2O + H(+). It catalyses the reaction L-glutamine + H2O = L-glutamate + NH4(+). Its pathway is cofactor biosynthesis; pyridoxal 5'-phosphate biosynthesis. In terms of biological role, catalyzes the hydrolysis of glutamine to glutamate and ammonia as part of the biosynthesis of pyridoxal 5'-phosphate. The resulting ammonia molecule is channeled to the active site of PdxS. This chain is Pyridoxal 5'-phosphate synthase subunit PdxT, found in Desulfitobacterium hafniense (strain Y51).